The primary structure comprises 314 residues: Carbamate kinase (314 aa).

The protein belongs to the carbamate kinase family. In terms of assembly, homodimer.

The catalysed reaction is hydrogencarbonate + NH4(+) + ATP = carbamoyl phosphate + ADP + H2O + H(+). Its pathway is metabolic intermediate metabolism; carbamoyl phosphate degradation; CO(2) and NH(3) from carbamoyl phosphate: step 1/1. This chain is Carbamate kinase (CBK), found in Trichomonas vaginalis.